Consider the following 709-residue polypeptide: Phosphoribosylformylglycinamidine synthase subunit PurL (709 aa).

Residue His-36 is part of the active site. Residues Tyr-39 and Lys-80 each contribute to the ATP site. Glu-82 is a Mg(2+) binding site. Substrate contacts are provided by residues 83–86 (SHNH) and Arg-105. His-84 functions as the Proton acceptor in the catalytic mechanism. Residue Asp-106 coordinates Mg(2+). Gln-226 lines the substrate pocket. Asp-252 is a binding site for Mg(2+). Residue 294–296 (ETQ) participates in substrate binding. ATP-binding residues include Asp-470 and Gly-507. Ser-510 contributes to the substrate binding site.

Belongs to the FGAMS family. As to quaternary structure, monomer. Part of the FGAM synthase complex composed of 1 PurL, 1 PurQ and 2 PurS subunits.

The protein resides in the cytoplasm. The catalysed reaction is N(2)-formyl-N(1)-(5-phospho-beta-D-ribosyl)glycinamide + L-glutamine + ATP + H2O = 2-formamido-N(1)-(5-O-phospho-beta-D-ribosyl)acetamidine + L-glutamate + ADP + phosphate + H(+). It participates in purine metabolism; IMP biosynthesis via de novo pathway; 5-amino-1-(5-phospho-D-ribosyl)imidazole from N(2)-formyl-N(1)-(5-phospho-D-ribosyl)glycinamide: step 1/2. Its function is as follows. Part of the phosphoribosylformylglycinamidine synthase complex involved in the purines biosynthetic pathway. Catalyzes the ATP-dependent conversion of formylglycinamide ribonucleotide (FGAR) and glutamine to yield formylglycinamidine ribonucleotide (FGAM) and glutamate. The FGAM synthase complex is composed of three subunits. PurQ produces an ammonia molecule by converting glutamine to glutamate. PurL transfers the ammonia molecule to FGAR to form FGAM in an ATP-dependent manner. PurS interacts with PurQ and PurL and is thought to assist in the transfer of the ammonia molecule from PurQ to PurL. The polypeptide is Phosphoribosylformylglycinamidine synthase subunit PurL (Saccharolobus islandicus (strain Y.N.15.51 / Yellowstone #2) (Sulfolobus islandicus)).